Reading from the N-terminus, the 191-residue chain is Calcium-activated potassium channel subunit beta-1 (191 aa).

Over 1 to 15 the chain is Cytoplasmic; sequence MGKKLVMAQKRGETR. A helical transmembrane segment spans residues 16–36; that stretch reads ALCLGVAMVMCAVITYYILGT. The Extracellular segment spans residues 37 to 157; sequence TMLPLYQKSV…YQRLYGPQAL (121 aa). N80 and N142 each carry an N-linked (GlcNAc...) asparagine glycan. A helical membrane pass occupies residues 158 to 178; it reads LASLFWPTFLLTGGLLIIAMV. Residues 179–191 lie on the Cytoplasmic side of the membrane; it reads KINRSLSILAAQK.

The protein belongs to the KCNMB (TC 8.A.14.1) family. KCNMB1 subfamily. Interacts with KCNMA1 tetramer. There are probably 4 molecules of KCMNB1 per KCNMA1 tetramer. Post-translationally, N-glycosylated.

It localises to the membrane. In terms of biological role, regulatory subunit of the calcium activated potassium KCNMA1 (maxiK) channel. Modulates the calcium sensitivity and gating kinetics of KCNMA1, thereby contributing to KCNMA1 channel diversity. Increases the apparent Ca(2+)/voltage sensitivity of the KCNMA1 channel. It also modifies KCNMA1 channel kinetics and alters its pharmacological properties. It slows down the activation and the deactivation kinetics of the channel. Acts as a negative regulator of smooth muscle contraction by enhancing the calcium sensitivity to KCNMA1. Its presence is also a requirement for internal binding of the KCNMA1 channel opener dehydrosoyasaponin I (DHS-1) triterpene glycoside and for external binding of the agonist hormone 17-beta-estradiol (E2). Increases the binding activity of charybdotoxin (CTX) toxin to KCNMA1 peptide blocker by increasing the CTX association rate and decreasing the dissociation rate. The polypeptide is Calcium-activated potassium channel subunit beta-1 (KCNMB1) (Oryctolagus cuniculus (Rabbit)).